The primary structure comprises 244 residues: Large ribosomal subunit protein uL3 (244 aa).

The disordered stretch occupies residues 215–244 (KKPPRERRGFAGSSTVDPLKASKRAVAKKK). A compositionally biased stretch (basic residues) spans 235–244 (ASKRAVAKKK).

The protein belongs to the universal ribosomal protein uL3 family. Part of the 50S ribosomal subunit. Forms a cluster with proteins L14 and L19.

Functionally, one of the primary rRNA binding proteins, it binds directly near the 3'-end of the 23S rRNA, where it nucleates assembly of the 50S subunit. The chain is Large ribosomal subunit protein uL3 from Koribacter versatilis (strain Ellin345).